The chain runs to 529 residues: E3 ubiquitin-protein ligase arih1 (529 aa).

Disordered stretches follow at residues 1–30 (MDSD…EDDL) and 49–68 (GICG…GEEE). The segment covering 51 to 64 (CGEGGGSALGPGPG) has biased composition (gly residues). The UBA-like stretch occupies residues 77–125 (TAEQILQHMVECIREVNEVIQNPATITRILLSHFNWDKEKLMERYFDGN). The segment at 154–365 (QDMPCQICYL…SAWYNCNRYN (212 aa)) is TRIAD supradomain. Residues cysteine 158, cysteine 161, cysteine 175, histidine 177, cysteine 180, cysteine 183, cysteine 203, cysteine 208, cysteine 248, cysteine 253, cysteine 269, cysteine 271, cysteine 276, cysteine 279, histidine 284, cysteine 289, cysteine 316, and cysteine 319 each coordinate Zn(2+). The segment at 158 to 208 (CQICYLNYPNSYFTGLECGHKFCMQCWSEYLTTKIIEEGMGQTISCPAHGC) adopts an RING-type 1 zinc-finger fold. Residues 228–289 (LKYQHLITNS…GENWHDPVKC (62 aa)) form an IBR-type zinc finger. The RING-type 2; atypical zinc finger occupies 316-347 (CPKCHVTIEKDGGCNHMVCRNQNCKAEFCWVC). Cysteine 329 is a catalytic residue. Cysteine 334, cysteine 339, cysteine 344, cysteine 347, histidine 354, and cysteine 361 together coordinate Zn(2+). The segment at 380–529 (RAALQRYLFY…EKDLWEYIED (150 aa)) is ariadne domain.

It belongs to the RBR family. Ariadne subfamily. As to quaternary structure, interacts (via the first RING-type zinc finger) with ube2l3. Associates with cullin-RING ubiquitin ligase (CRL) complexes containing neddylated cullin.

Its subcellular location is the cytoplasm. The protein resides in the nucleus. The catalysed reaction is [E2 ubiquitin-conjugating enzyme]-S-ubiquitinyl-L-cysteine + [acceptor protein]-L-lysine = [E2 ubiquitin-conjugating enzyme]-L-cysteine + [acceptor protein]-N(6)-ubiquitinyl-L-lysine.. It participates in protein modification; protein ubiquitination. Its activity is regulated as follows. Autoinhibited by the ariadne domain, which masks the second RING-type zinc finger that contains the active site and inhibits the E3 activity. Inhibition is relieved upon binding to neddylated cullin-RING ubiquitin ligase complexes, which activate the E3 ligase activity of ARIH1. In terms of biological role, E3 ubiquitin-protein ligase, which catalyzes ubiquitination of target proteins together with ubiquitin-conjugating enzyme E2 ube2l3. Acts as an atypical E3 ubiquitin-protein ligase by working together with cullin-RING ubiquitin ligase (CRL) complexes and initiating ubiquitination of CRL substrates: associates with CRL complexes and specifically mediates addition of the first ubiquitin on CRLs targets. The initial ubiquitin is then elongated. E3 ubiquitin-protein ligase activity is activated upon binding to neddylated cullin-RING ubiquitin ligase complexes. The polypeptide is E3 ubiquitin-protein ligase arih1 (arih1) (Xenopus tropicalis (Western clawed frog)).